The sequence spans 207 residues: Claudin-11 (207 aa).

Residue M1 is a topological domain, cytoplasmic. Residues 2-22 (VATCLQVVGFVTSFVGWIGII) traverse the membrane as a helical segment. The Extracellular portion of the chain corresponds to 23–82 (VTTSTNDWVVTCSYTIPTCRKMDELGSKGLWADCVMATGLYHCKPLVDILILPGYVQACR). The chain crosses the membrane as a helical span at residues 83-103 (ALMIAASVLGLPAILLLLTVL). The Cytoplasmic segment spans residues 104–122 (PCIRMGHEPGVAKYRRAQL). The chain crosses the membrane as a helical span at residues 123 to 143 (AGVLLILLALCAIVATIWFPV). The Extracellular portion of the chain corresponds to 144–157 (CAHREITIVSFGYS). A helical transmembrane segment spans residues 158 to 178 (LYAGWIGAVMCLVGGCVIVCC). The Cytoplasmic portion of the chain corresponds to 179 to 207 (SGDAQSFGENRFYYSSGSSSPTHAKSAHV). S193, S194, S197, and S198 each carry phosphoserine.

Belongs to the claudin family. In terms of assembly, interacts with tetraspanin-3/TSPAN3. Interacts with OCLN.

It localises to the cell junction. It is found in the tight junction. Its subcellular location is the cell membrane. In terms of biological role, plays a major role in tight junction-specific obliteration of the intercellular space, through calcium-independent cell-adhesion activity. This Mus musculus (Mouse) protein is Claudin-11 (Cldn11).